The sequence spans 144 residues: 3-hydroxyacyl-[acyl-carrier-protein] dehydratase FabZ (144 aa).

Residue His-47 is part of the active site.

It belongs to the thioester dehydratase family. FabZ subfamily.

It is found in the cytoplasm. It carries out the reaction a (3R)-hydroxyacyl-[ACP] = a (2E)-enoyl-[ACP] + H2O. In terms of biological role, involved in unsaturated fatty acids biosynthesis. Catalyzes the dehydration of short chain beta-hydroxyacyl-ACPs and long chain saturated and unsaturated beta-hydroxyacyl-ACPs. The polypeptide is 3-hydroxyacyl-[acyl-carrier-protein] dehydratase FabZ (Nitrosomonas eutropha (strain DSM 101675 / C91 / Nm57)).